We begin with the raw amino-acid sequence, 180 residues long: uncharacterized protein (180 aa).

Residues 114-136 (DKISESDSLPDEYKEYVVKHDSD) show a composition bias toward basic and acidic residues. The interval 114 to 180 (DKISESDSLP…NFDNPDDNPK (67 aa)) is disordered. Residues 137–146 (NSDNDSDNSD) show a composition bias toward acidic residues. Over residues 147 to 173 (NDSNNSDNDSNNSDSDSDNSNDPNNFD) the composition is skewed to low complexity.

This is an uncharacterized protein from Acanthamoeba polyphaga (Amoeba).